A 227-amino-acid polypeptide reads, in one-letter code: Thiamine-phosphate synthase (227 aa).

Residues 50–54 and Asp82 contribute to the 4-amino-2-methyl-5-(diphosphooxymethyl)pyrimidine site; that span reads QFRQK. Residues Asp83 and Asp102 each coordinate Mg(2+). Thr121 serves as a coordination point for 4-amino-2-methyl-5-(diphosphooxymethyl)pyrimidine. Residue 147–149 coordinates 2-[(2R,5Z)-2-carboxy-4-methylthiazol-5(2H)-ylidene]ethyl phosphate; sequence TTS. Residue Lys150 participates in 4-amino-2-methyl-5-(diphosphooxymethyl)pyrimidine binding. Residues Gly178 and 198-199 contribute to the 2-[(2R,5Z)-2-carboxy-4-methylthiazol-5(2H)-ylidene]ethyl phosphate site; that span reads LS.

This sequence belongs to the thiamine-phosphate synthase family. The cofactor is Mg(2+).

The catalysed reaction is 2-[(2R,5Z)-2-carboxy-4-methylthiazol-5(2H)-ylidene]ethyl phosphate + 4-amino-2-methyl-5-(diphosphooxymethyl)pyrimidine + 2 H(+) = thiamine phosphate + CO2 + diphosphate. The enzyme catalyses 2-(2-carboxy-4-methylthiazol-5-yl)ethyl phosphate + 4-amino-2-methyl-5-(diphosphooxymethyl)pyrimidine + 2 H(+) = thiamine phosphate + CO2 + diphosphate. It catalyses the reaction 4-methyl-5-(2-phosphooxyethyl)-thiazole + 4-amino-2-methyl-5-(diphosphooxymethyl)pyrimidine + H(+) = thiamine phosphate + diphosphate. It functions in the pathway cofactor biosynthesis; thiamine diphosphate biosynthesis; thiamine phosphate from 4-amino-2-methyl-5-diphosphomethylpyrimidine and 4-methyl-5-(2-phosphoethyl)-thiazole: step 1/1. Condenses 4-methyl-5-(beta-hydroxyethyl)thiazole monophosphate (THZ-P) and 2-methyl-4-amino-5-hydroxymethyl pyrimidine pyrophosphate (HMP-PP) to form thiamine monophosphate (TMP). This is Thiamine-phosphate synthase from Salinibacter ruber (strain DSM 13855 / M31).